We begin with the raw amino-acid sequence, 321 residues long: Lipoyl synthase (321 aa).

[4Fe-4S] cluster-binding residues include C68, C73, C79, C94, C98, C101, and S308. Residues 80–297 (FNHGTATFMI…KAEALAMGFT (218 aa)) form the Radical SAM core domain.

Belongs to the radical SAM superfamily. Lipoyl synthase family. Requires [4Fe-4S] cluster as cofactor.

It localises to the cytoplasm. It carries out the reaction [[Fe-S] cluster scaffold protein carrying a second [4Fe-4S](2+) cluster] + N(6)-octanoyl-L-lysyl-[protein] + 2 oxidized [2Fe-2S]-[ferredoxin] + 2 S-adenosyl-L-methionine + 4 H(+) = [[Fe-S] cluster scaffold protein] + N(6)-[(R)-dihydrolipoyl]-L-lysyl-[protein] + 4 Fe(3+) + 2 hydrogen sulfide + 2 5'-deoxyadenosine + 2 L-methionine + 2 reduced [2Fe-2S]-[ferredoxin]. It functions in the pathway protein modification; protein lipoylation via endogenous pathway; protein N(6)-(lipoyl)lysine from octanoyl-[acyl-carrier-protein]: step 2/2. Its function is as follows. Catalyzes the radical-mediated insertion of two sulfur atoms into the C-6 and C-8 positions of the octanoyl moiety bound to the lipoyl domains of lipoate-dependent enzymes, thereby converting the octanoylated domains into lipoylated derivatives. The sequence is that of Lipoyl synthase from Edwardsiella ictaluri (strain 93-146).